The sequence spans 351 residues: Probable cell division control protein 7 homolog 2 (351 aa).

One can recognise a Protein kinase domain in the interval 21 to 341 (YTPIEKIGEG…ASDALSHPFF (321 aa)). Residues 27-35 (IGEGSFSVV) and K50 contribute to the ATP site. Catalysis depends on D137, which acts as the Proton acceptor.

This sequence belongs to the protein kinase superfamily. Ser/Thr protein kinase family. CDC7 subfamily. The cofactor is Mg(2+).

It catalyses the reaction L-seryl-[protein] + ATP = O-phospho-L-seryl-[protein] + ADP + H(+). The catalysed reaction is L-threonyl-[protein] + ATP = O-phospho-L-threonyl-[protein] + ADP + H(+). Its function is as follows. Serine/threonine-protein kinase. Needed for the initiation of DNA synthesis during mitosis as well as for synaptonemal complex formation and commitment to recombination during meiosis. This is Probable cell division control protein 7 homolog 2 (CDC7-2) from Encephalitozoon cuniculi (strain GB-M1) (Microsporidian parasite).